The following is a 210-amino-acid chain: Two-component response regulator ORR7 (210 aa).

The interval 53 to 92 (VVPLHDNASAEDDDDDEEDDDEDDDDDDDEDDEEEAAPPY) is disordered. Residues 61–88 (SAEDDDDDEEDDDEDDDDDDDEDDEEEA) are compositionally biased toward acidic residues. One can recognise a Response regulatory domain in the interval 92–205 (YVMAVDDSSV…VRPADISRIT (114 aa)). Aspartate 142 carries the post-translational modification 4-aspartylphosphate.

Belongs to the ARR family. Type-A subfamily. Two-component system major event consists of a His-to-Asp phosphorelay between a sensor histidine kinase (HK) and a response regulator (RR). In plants, the His-to-Asp phosphorelay involves an additional intermediate named Histidine-containing phosphotransfer protein (HPt). This multistep phosphorelay consists of a His-Asp-His-Asp sequential transfer of a phosphate group between first a His and an Asp of the HK protein, followed by the transfer to a conserved His of the HPt protein and finally the transfer to an Asp in the receiver domain of the RR protein.

Functionally, functions as a response regulator involved in His-to-Asp phosphorelay signal transduction system. Phosphorylation of the Asp residue in the receiver domain activates the ability of the protein to promote the transcription of target genes. Type-A response regulators seem to act as negative regulators of the cytokinin signaling. The polypeptide is Two-component response regulator ORR7 (Oryza sativa subsp. japonica (Rice)).